The primary structure comprises 445 residues: NADH-quinone oxidoreductase subunit F (445 aa).

61 to 70 (GRGGAGFSTG) provides a ligand contact to NAD(+). 174-221 (GAGRYICGEETALINSLEGRRANPRSKPPFPATSGVWGKPTCVNNVET) contacts FMN. The [4Fe-4S] cluster site is built by Cys351, Cys354, Cys357, and Cys398.

This sequence belongs to the complex I 51 kDa subunit family. As to quaternary structure, composed of 13 different subunits. Subunits NuoCD, E, F, and G constitute the peripheral sector of the complex. FMN serves as cofactor. The cofactor is [4Fe-4S] cluster.

The catalysed reaction is a quinone + NADH + 5 H(+)(in) = a quinol + NAD(+) + 4 H(+)(out). Functionally, NDH-1 shuttles electrons from NADH, via FMN and iron-sulfur (Fe-S) centers, to quinones in the respiratory chain. The immediate electron acceptor for the enzyme in this species is believed to be ubiquinone. Couples the redox reaction to proton translocation (for every two electrons transferred, four hydrogen ions are translocated across the cytoplasmic membrane), and thus conserves the redox energy in a proton gradient. The sequence is that of NADH-quinone oxidoreductase subunit F (nuoF) from Salmonella typhimurium (strain LT2 / SGSC1412 / ATCC 700720).